Consider the following 439-residue polypeptide: Nuclear hormone receptor family member nhr-97 (439 aa).

Residues 1–13 (MSGDAQPSSNQRA) show a composition bias toward polar residues. Residues 1 to 22 (MSGDAQPSSNQRATEARPPPSP) are disordered. The segment at residues 32–108 (GALCVVCGDR…VGMKIEAVKM (77 aa)) is a DNA-binding region (nuclear receptor). 2 NR C4-type zinc fingers span residues 35–56 (CVVC…CHGC) and 72–96 (CRYG…FHRC). The segment at 112–135 (LTKRKKEKTDEDDTDDGGSHESFE) is disordered. Residues 173 to 408 (FVQPSLQNLL…GEGLLFWQLY (236 aa)) enclose the NR LBD domain.

The protein belongs to the nuclear hormone receptor family.

It is found in the nucleus. In terms of biological role, orphan nuclear receptor. This chain is Nuclear hormone receptor family member nhr-97 (nhr-97), found in Caenorhabditis elegans.